The primary structure comprises 315 residues: Probable cell division protein WhiA (315 aa).

A DNA-binding region (H-T-H motif) is located at residues 278-312 (SLSDLAGMIEGQELTKSGINHRMRKLMQIVKELNH).

This sequence belongs to the WhiA family.

Functionally, involved in cell division and chromosome segregation. The sequence is that of Probable cell division protein WhiA from Oenococcus oeni (strain ATCC BAA-331 / PSU-1).